Reading from the N-terminus, the 394-residue chain is Phosphoglycerate kinase (394 aa).

Substrate contacts are provided by residues 21–23, Arg36, 59–62, Arg118, and Arg151; these read DFN and HLGR. Ser183 is subject to Phosphoserine. ATP is bound by residues Lys201 and Gly292. Thr299 carries the phosphothreonine modification. ATP contacts are provided by residues Glu323 and 350-353; that span reads GGDS.

The protein belongs to the phosphoglycerate kinase family. In terms of assembly, monomer.

It is found in the cytoplasm. It carries out the reaction (2R)-3-phosphoglycerate + ATP = (2R)-3-phospho-glyceroyl phosphate + ADP. It functions in the pathway carbohydrate degradation; glycolysis; pyruvate from D-glyceraldehyde 3-phosphate: step 2/5. This is Phosphoglycerate kinase from Bacillus thuringiensis (strain Al Hakam).